The chain runs to 216 residues: Large ribosomal subunit protein uL24m (216 aa).

The N-terminal 9 residues, 1–9 (MRLTLLLEM), are a transit peptide targeting the mitochondrion. In terms of domain architecture, KOW spans 56-89 (YFRGDTVEVLHGKDAGKQGKVTQVVRARNWVVVD).

This sequence belongs to the universal ribosomal protein uL24 family. As to quaternary structure, component of the mitochondrial ribosome large subunit (39S) which comprises a 16S rRNA and about 50 distinct proteins. In terms of tissue distribution, ubiquitous. Expressed at greater levels in the kidney, adipose tissue, muscle and liver than the brain, heart, ovary and lung.

The protein resides in the mitochondrion. This Xenopus laevis (African clawed frog) protein is Large ribosomal subunit protein uL24m (mrpl24).